Here is a 310-residue protein sequence, read N- to C-terminus: Glutaminase 1 (310 aa).

The substrate site is built by Ser66, Asn117, Glu161, Asn168, Tyr192, Tyr244, and Val262. Lys294 is subject to N6-acetyllysine.

It belongs to the glutaminase family. In terms of assembly, homotetramer.

It carries out the reaction L-glutamine + H2O = L-glutamate + NH4(+). The sequence is that of Glutaminase 1 from Escherichia coli (strain K12).